A 158-amino-acid polypeptide reads, in one-letter code: Phosphopantetheine adenylyltransferase (158 aa).

S8 contacts substrate. Residues 8–9 and H16 each bind ATP; that span reads SF. Substrate-binding residues include K40, T72, and R86. Residues 87 to 89, E97, and 122 to 128 contribute to the ATP site; these read GLR and HSFLSSS.

The protein belongs to the bacterial CoaD family. As to quaternary structure, homohexamer. The cofactor is Mg(2+).

It is found in the cytoplasm. It catalyses the reaction (R)-4'-phosphopantetheine + ATP + H(+) = 3'-dephospho-CoA + diphosphate. It participates in cofactor biosynthesis; coenzyme A biosynthesis; CoA from (R)-pantothenate: step 4/5. Reversibly transfers an adenylyl group from ATP to 4'-phosphopantetheine, yielding dephospho-CoA (dPCoA) and pyrophosphate. The protein is Phosphopantetheine adenylyltransferase of Prochlorococcus marinus (strain NATL2A).